The primary structure comprises 268 residues: Indole-3-glycerol phosphate synthase (268 aa).

It belongs to the TrpC family.

It carries out the reaction 1-(2-carboxyphenylamino)-1-deoxy-D-ribulose 5-phosphate + H(+) = (1S,2R)-1-C-(indol-3-yl)glycerol 3-phosphate + CO2 + H2O. It functions in the pathway amino-acid biosynthesis; L-tryptophan biosynthesis; L-tryptophan from chorismate: step 4/5. The protein is Indole-3-glycerol phosphate synthase of Parafrankia sp. (strain EAN1pec).